A 36-amino-acid chain; its full sequence is Cecropin-D (36 aa).

Lysine amide is present on Lys-36.

Belongs to the cecropin family.

It is found in the secreted. Functionally, cecropins have lytic and antibacterial activity against several Gram-positive and Gram-negative bacteria. This is Cecropin-D from Antheraea pernyi (Chinese oak silk moth).